Here is a 426-residue protein sequence, read N- to C-terminus: G2/mitotic-specific cyclin-A (426 aa).

The span at 1 to 11 shows a compositional bias: polar residues; the sequence is MSMVHGSSFQI. Residues 1-22 form a disordered region; that stretch reads MSMVHGSSFQIAQDGENENQGV.

The protein belongs to the cyclin family. Cyclin AB subfamily.

Its function is as follows. Essential for the control of the cell cycle at the G2/M (mitosis) transition. Interacts with the CDC2 and CDK2 protein kinases to form MPF. G2/M cyclins accumulate steadily during G2 and are abruptly destroyed at mitosis. The protein is G2/mitotic-specific cyclin-A of Patella vulgata (Common limpet).